The chain runs to 61 residues: Potassium channel toxin alpha-KTx 15.6 (61 aa).

The first 23 residues, Met1–Ser23, serve as a signal peptide directing secretion. Gln24 carries the post-translational modification Pyrrolidone carboxylic acid. 3 disulfide bridges follow: Cys31–Cys52, Cys37–Cys57, and Cys41–Cys59.

The protein belongs to the short scorpion toxin superfamily. Potassium channel inhibitor family. Alpha-KTx 15 subfamily. Expressed by the venom gland.

It localises to the secreted. Irreversibly blocks the A-type voltage-gated potassium channels in rat cerebellum granular cells (190 nM induce 50% inhibitory effect) (IC(50)=190 nM). Also weakly inhibits Kv1.2/KCNA2 and Kv1.3/KCNA3. The sequence is that of Potassium channel toxin alpha-KTx 15.6 from Tityus discrepans (Venezuelan scorpion).